Consider the following 652-residue polypeptide: ATP-dependent zinc metalloprotease FtsH (652 aa).

At 1 to 11 the chain is on the cytoplasmic side; sequence MKKQNNGLIKN. Residues 12–32 form a helical membrane-spanning segment; it reads PFLWLLFIFFLVTGFQYFYSG. Topologically, residues 33 to 131 are extracellular; that stretch reads NNSGGSQQIN…EVTVKHESSS (99 aa). A helical transmembrane segment spans residues 132-152; the sequence is GIWINLLVSIVPFGILFFFLF. The Cytoplasmic portion of the chain corresponds to 153 to 652; the sequence is SMMGNMGGGN…EVKSKMNDEK (500 aa). An ATP-binding site is contributed by 227–234; sequence GPPGTGKT. Residue histidine 449 coordinates Zn(2+). Glutamate 450 is an active-site residue. Zn(2+)-binding residues include histidine 453 and aspartate 525. A disordered region spans residues 628–652; that stretch reads MPEAVEEESHALSYDEVKSKMNDEK. Basic and acidic residues predominate over residues 634–652; it reads EESHALSYDEVKSKMNDEK.

The protein in the central section; belongs to the AAA ATPase family. It in the C-terminal section; belongs to the peptidase M41 family. As to quaternary structure, homohexamer. The cofactor is Zn(2+).

It localises to the cell membrane. Its function is as follows. Acts as a processive, ATP-dependent zinc metallopeptidase for both cytoplasmic and membrane proteins. Plays a role in the quality control of integral membrane proteins. This chain is ATP-dependent zinc metalloprotease FtsH, found in Streptococcus pneumoniae (strain ATCC BAA-255 / R6).